Reading from the N-terminus, the 445-residue chain is Adenylosuccinate synthetase (445 aa).

Residues 12 to 18 (GDEGKGK) and 40 to 42 (GHT) each bind GTP. Aspartate 13 functions as the Proton acceptor in the catalytic mechanism. Positions 13 and 40 each coordinate Mg(2+). Residues 13–16 (DEGK), 38–41 (NAGH), threonine 128, arginine 142, glutamine 223, threonine 238, and arginine 302 contribute to the IMP site. Histidine 41 acts as the Proton donor in catalysis. 298-304 (TTTGRKR) is a substrate binding site. GTP contacts are provided by residues arginine 304, 330–332 (KLD), and 411–413 (SLG).

The protein belongs to the adenylosuccinate synthetase family. As to quaternary structure, homodimer. It depends on Mg(2+) as a cofactor.

The protein localises to the cytoplasm. The catalysed reaction is IMP + L-aspartate + GTP = N(6)-(1,2-dicarboxyethyl)-AMP + GDP + phosphate + 2 H(+). Its pathway is purine metabolism; AMP biosynthesis via de novo pathway; AMP from IMP: step 1/2. In terms of biological role, plays an important role in the de novo pathway of purine nucleotide biosynthesis. Catalyzes the first committed step in the biosynthesis of AMP from IMP. The protein is Adenylosuccinate synthetase of Cyanothece sp. (strain PCC 7425 / ATCC 29141).